The following is a 195-amino-acid chain: Glucagon family neuropeptides (195 aa).

An N-terminal signal peptide occupies residues 1 to 20 (MAKSSRATLALLIYGILMRY). The propeptide occupies 21-82 (SQCTPIGMGF…YYPPERRAET (62 aa)). A disordered region spans residues 113–132 (VGEEEEDEEDSEPLSKRHSD). Positions 115-124 (EEEEDEEDSE) are enriched in acidic residues. Lys-167 carries the post-translational modification Lysine amide. The propeptide occupies 171-195 (LVVPSVWTGIRDTVIITPEKRGKRY).

The protein belongs to the glucagon family. Brain, testis, ovary and stomach. Not pancreas, pituitary, muscle and liver.

It is found in the secreted. Its function is as follows. Primary role of GHRH is to release GH from the pituitary. PACAP plays pivotal roles as a neurotransmitter and/or a neuromodulator. The sequence is that of Glucagon family neuropeptides from Clarias macrocephalus (Bighead catfish).